The sequence spans 434 residues: Trigger factor (434 aa).

Positions 161–246 constitute a PPIase FKBP-type domain; it reads EDRVTVDFSG…LKKVEERELP (86 aa).

Belongs to the FKBP-type PPIase family. Tig subfamily.

The protein resides in the cytoplasm. The enzyme catalyses [protein]-peptidylproline (omega=180) = [protein]-peptidylproline (omega=0). Involved in protein export. Acts as a chaperone by maintaining the newly synthesized protein in an open conformation. Functions as a peptidyl-prolyl cis-trans isomerase. In Serratia proteamaculans (strain 568), this protein is Trigger factor.